Reading from the N-terminus, the 847-residue chain is DNA mismatch repair protein MutS (847 aa).

602–609 (GPNMSGKS) serves as a coordination point for ATP. A disordered region spans residues 788 to 807 (EKREASLPASRTDSQKVSEQ). Residues 796-807 (ASRTDSQKVSEQ) show a composition bias toward polar residues.

The protein belongs to the DNA mismatch repair MutS family.

In terms of biological role, this protein is involved in the repair of mismatches in DNA. It is possible that it carries out the mismatch recognition step. This protein has a weak ATPase activity. The chain is DNA mismatch repair protein MutS from Streptococcus gordonii (strain Challis / ATCC 35105 / BCRC 15272 / CH1 / DL1 / V288).